Here is a 515-residue protein sequence, read N- to C-terminus: Bifunctional purine biosynthesis protein PurH (515 aa).

One can recognise an MGS-like domain in the interval 1 to 145; it reads MTKRALISVS…KNHASVTVVV (145 aa).

The protein belongs to the PurH family.

The enzyme catalyses (6R)-10-formyltetrahydrofolate + 5-amino-1-(5-phospho-beta-D-ribosyl)imidazole-4-carboxamide = 5-formamido-1-(5-phospho-D-ribosyl)imidazole-4-carboxamide + (6S)-5,6,7,8-tetrahydrofolate. It carries out the reaction IMP + H2O = 5-formamido-1-(5-phospho-D-ribosyl)imidazole-4-carboxamide. It functions in the pathway purine metabolism; IMP biosynthesis via de novo pathway; 5-formamido-1-(5-phospho-D-ribosyl)imidazole-4-carboxamide from 5-amino-1-(5-phospho-D-ribosyl)imidazole-4-carboxamide (10-formyl THF route): step 1/1. Its pathway is purine metabolism; IMP biosynthesis via de novo pathway; IMP from 5-formamido-1-(5-phospho-D-ribosyl)imidazole-4-carboxamide: step 1/1. In Streptococcus pyogenes serotype M6 (strain ATCC BAA-946 / MGAS10394), this protein is Bifunctional purine biosynthesis protein PurH.